The following is a 757-amino-acid chain: DNA endonuclease RBBP8 (757 aa).

Residues 22 to 45 (DLWTKLKEYHDKETQGLQVKVTKL) form an essential for binding to the MRN complex and for RPA focus formation on DNA damage region. A coiled-coil region spans residues 35–84 (TQGLQVKVTKLKKERILDAQRLEEFFTKNQQLREQQKVLHETIKVLEDRL). Residues 45-160 (LKKERILDAQ…TDLESEEDVI (116 aa)) form a required for interaction with LMO4, probably by stabilizing the interaction through RPPB8 dimerization region. Glycyl lysine isopeptide (Lys-Gly) (interchain with G-Cter in SUMO2) cross-links involve residues lysine 62 and lysine 115. A coiled-coil region spans residues 117–138 (ITELMNEKNTLQEENKKLSEQL). Residue lysine 193 forms a Glycyl lysine isopeptide (Lys-Gly) (interchain with G-Cter in SUMO2) linkage. Serine 272 is modified (phosphoserine). At threonine 309 the chain carries Phosphothreonine. Serine 320, serine 321, and serine 343 each carry phosphoserine. The segment at 348-375 (GKKTHLKTVPLSNTSAPGPEKPRSKSED) is disordered. Glycyl lysine isopeptide (Lys-Gly) (interchain with G-Cter in SUMO2) cross-links involve residues lysine 354 and lysine 372. Serine 373 carries the post-translational modification Phosphoserine. Glycyl lysine isopeptide (Lys-Gly) (interchain with G-Cter in SUMO2) cross-links involve residues lysine 390, lysine 399, and lysine 405. The span at 407 to 417 (TSEPISEQGNI) shows a compositional bias: polar residues. A disordered region spans residues 407-430 (TSEPISEQGNIGHSKDTDRDKHVV). Residues 419–429 (HSKDTDRDKHV) show a composition bias toward basic and acidic residues. Glycyl lysine isopeptide (Lys-Gly) (interchain with G-Cter in SUMO2) cross-links involve residues lysine 433 and lysine 443. The PXDLS motif stretch occupies residues 484–488 (PLDLS). The PXDLS motif motif lies at 484–488 (PLDLS). Positions 503–551 (CENSKIRFRQVTLYEALKPIPRDSSSSRKALSGSCGLTKDSPEEPCLQE) are damage-recruitment motif. A Glycyl lysine isopeptide (Lys-Gly) (interchain with G-Cter in SUMO2); alternate cross-link involves residue lysine 520. Positions 524–544 (RDSSSSRKALSGSCGLTKDSP) are disordered. Glycyl lysine isopeptide (Lys-Gly) (interchain with G-Cter in SUMO2) cross-links involve residues lysine 564 and lysine 570. Residue lysine 596 forms a Glycyl lysine isopeptide (Lys-Gly) (interchain with G-Cter in SUMO2); alternate linkage. Residues lysine 605, lysine 630, and lysine 632 each participate in a glycyl lysine isopeptide (Lys-Gly) (interchain with G-Cter in SUMO2) cross-link. Residues 633–677 (SLQNNQDVSFENIQWSIDPGADLSQYKMGVTVDDTKDGSQSRLAG) form a required for interaction with LMO4, probably by making physical contact with LMO4 region. Serine 656 carries the phosphoserine; by ATM modification. Lysine 668 participates in a covalent cross-link: Glycyl lysine isopeptide (Lys-Gly) (interchain with G-Cter in SUMO2). Serine 671 bears the Phosphoserine mark. Residues 696 to 728 (KKQEQKGEESPNGERKMNDSLEDMFDRTTHEEY) show a composition bias toward basic and acidic residues. Residues 696–757 (KKQEQKGEES…TTTKKPNISW (62 aa)) are disordered. Lysine 711 is covalently cross-linked (Glycyl lysine isopeptide (Lys-Gly) (interchain with G-Cter in SUMO2)). Serine 715 carries the post-translational modification Phosphoserine. Polar residues predominate over residues 747-757 (STTTKKPNISW).

Belongs to the COM1/SAE2/CtIP family. As to quaternary structure, homotetramer; formed by antiparallel association of helical extensions protruding from the N-termini of two parallel coiled-coil dimers. Forms a dumbbell-shaped particle in which polar globular domains are held about 30 nm apart by a central rod. Homotetramerization is required for DNA-end resection and repair. Interacts (via the PXDLS motif) with CTBP1; the interaction is disrupted via binding of the adenovirus E1A to CTBP1. Component of the BRCA1-RBBP8 complex. Interacts (the Ser-321 phosphorylated form) with BRCA1 (via the C-terminal BRCT domains): the interaction occurs in the G2 phase, ubiquitinates RBBP8 and involves RBBP8 in BRCA1-dependent G2/M checkpoint control on DNA damage. Interacts with RB1. Interacts with the MRN complex. Interacts directly with MRE11; the interaction is required for efficient homologous recombination (HR) and regulation of the MRN complex. Interacts directly with RAD50. Interacts (when phosphorylated by CDK1) with NBN; promoting association with the MRN complex. Interacts with LMO4 (via the LIM zinc-binding 1 domain). Interacts with SIAH1. Interacts with RNF138. Interacts with EXD2. Interacts with CUL3 and KLHL15; this interaction leads to RBBP8 proteasomal degradation. Directly interacts with PIN1; this interaction depends upon RBBP8 phosphorylation, predominantly at Thr-309. Interacts with FZR1; this interaction leads to APC/C-mediated RBBP8 proteasomal degradation. Interacts with AUNIP; leading to recruit RBBP8 to sites of DNA damage. Interacts with SAMHD1. Interacts with HDGFL2. Post-translationally, hyperphosphorylation upon ionizing radiation results in dissociation from BRCA1. Phosphorylation by CDK1 is essential for the recruitment to DNA and the DNA repair function. Phosphorylated on Ser-321 as cells enter G2 phase. This phosphorylation is required for binding BRCA1 and for the G2/M DNA damage transition checkpoint control. Phosphorylation at Thr-309, probably catalyzed by CDK2, is required for PIN1-binding, while phosphorylation at Ser-272 serves as a PIN1 isomerization site. Phosphorylation at Thr-309 is cell-cycle dependent. It steadily increases during S phase, peaks at late S/G2 phase, and drops at G1. Phosphorylation is not required for tetramerization. Binds to DNA more strongly when dephosphorylated. Ubiquitinated. Ubiquitination at multiple sites by BRCA1 (via its N-terminal RING domain) does not lead to its proteasomal degradation but instead the ubiquitinated RBBP8 binds to chromatin following DNA damage and may play a role in G2/M checkpoint control. Ubiquitinated by RNF138 at its N-terminus. Ubiquitinated through 'Lys-48' by the E3 CUL3-KLHL15 complex; this modification leads to proteasomal degradation. Ubiquitinated by the E3 FZR1/APC/C complex; this modification leads to proteasomal degradation.

It is found in the nucleus. The protein localises to the chromosome. In terms of biological role, endonuclease that cooperates with the MRE11-RAD50-NBN (MRN) complex in DNA-end resection, the first step of double-strand break (DSB) repair through the homologous recombination (HR) pathway. HR is restricted to S and G2 phases of the cell cycle and preferentially repairs DSBs resulting from replication fork collapse. Key determinant of DSB repair pathway choice, as it commits cells to HR by preventing classical non-homologous end-joining (NHEJ). Specifically promotes the endonuclease activity of the MRN complex to clear DNA ends containing protein adducts: recruited to DSBs by NBN following phosphorylation by CDK1, and promotes the endonuclease activity of MRE11 to clear protein-DNA adducts and generate clean double-strand break ends. Functions downstream of the MRN complex and ATM, promotes ATR activation and its recruitment to DSBs in the S/G2 phase facilitating the generation of ssDNA. Component of the BRCA1-RBBP8 complex that regulates CHEK1 activation and controls cell cycle G2/M checkpoints on DNA damage. During immunoglobulin heavy chain class-switch recombination, promotes microhomology-mediated alternative end joining (A-NHEJ) and plays an essential role in chromosomal translocations. Binds preferentially to DNA Y-junctions and to DNA substrates with blocked ends and promotes intermolecular DNA bridging. This Bos taurus (Bovine) protein is DNA endonuclease RBBP8 (RBBP8).